Reading from the N-terminus, the 229-residue chain is Large ribosomal subunit protein uL3 (229 aa).

At glutamine 151 the chain carries N5-methylglutamine.

The protein belongs to the universal ribosomal protein uL3 family. As to quaternary structure, part of the 50S ribosomal subunit. Forms a cluster with proteins L14 and L19. In terms of processing, methylated by PrmB.

Its function is as follows. One of the primary rRNA binding proteins, it binds directly near the 3'-end of the 23S rRNA, where it nucleates assembly of the 50S subunit. This chain is Large ribosomal subunit protein uL3, found in Paramagnetospirillum magneticum (strain ATCC 700264 / AMB-1) (Magnetospirillum magneticum).